We begin with the raw amino-acid sequence, 607 residues long: MELILNSLISDDLTEEQKRLSLDFLQDILQSNTKDYESYFSSRAVPGSITEDIAEIDAELSALDRKIRKTLLDNTSQIIGNILENDDRAQLDDIAKSLEQLWELDTNINKAADRNVTNDDINNESVSIDDFLEDDKEDNDTGRIMTTESNNLARKKKEDEFHKALSRLRNRISTKEDDKDDIRSDTLVTVLENLDSITDLMELPFLARTCIRTGHYQEAVMLYTHTTSLRSRFPGSTIVDEVCEKVLNEISTTMLSGLVKLLSTNVSVNSLKKILQYLNSIPPFDGKTNKSLLSVFLAMRYKFITDEIASYPLDVESSNESLIEMMVKRKIEVLREHVYMSLNVFLKSFLYDTNDLEIPFPEELESTVLRINGTNEEKEIEEKEKETKKEEYQKQDSVANNEEDVTENKSIEDVQEEVQGKVEGEDDGAERKTENEIENETVNKTEDKAEKEKEEEVNTKDNKAEKEEEEINKVEVTPEEPSKSIDNKAEKEEEEINKVEVTPEEPSKKIRTSKRENKIPTNAVMLQFVDKCITYVLKDLTRGLNSIKLSDSVCLQLVYCSFRLCDLNRNYHHLFLKKINDTSLFTTEQLARAIDKRAELASKYIYS.

Basic and acidic residues-rich tracts occupy residues 375–394, 406–466, 480–491, and 505–514; these read NEEKEIEEKEKETKKEEYQK, TENK…KAEK, EPSKSIDNKAEK, and EPSKKIRTSK. Positions 375–514 are disordered; that stretch reads NEEKEIEEKE…EPSKKIRTSK (140 aa). S410 is subject to Phosphoserine.

This sequence belongs to the COG8 family. As to quaternary structure, component of the conserved oligomeric Golgi (COG or Sec34/Sec35) complex which consists of eight different proteins COG1-COG8.

It localises to the golgi apparatus membrane. Its function is as follows. Acts as a component of the peripheral membrane COG complex that is involved in intra-Golgi protein trafficking. COG is located at the cis-Golgi, and regulates tethering of retrograde intra-Golgi vesicles and possibly a number of other membrane trafficking events. This Saccharomyces cerevisiae (strain ATCC 204508 / S288c) (Baker's yeast) protein is Conserved oligomeric Golgi complex subunit 8 (COG8).